We begin with the raw amino-acid sequence, 64 residues long: LTCHTCPYNTCANSETCPAGKNICYQKKWEEHRGERIERSCVANCPEFESSHTSLLCCTTANCD.

Disulfide bonds link Cys-3-Cys-24, Cys-6-Cys-11, Cys-17-Cys-41, Cys-45-Cys-57, and Cys-58-Cys-63.

The protein belongs to the three-finger toxin family. Ancestral subfamily. In terms of tissue distribution, expressed by the venom gland.

The protein resides in the secreted. Produces peripheral paralysis by blocking neuromuscular transmission at the postsynaptic site. Very weak inhibitor of the endogenous nicotinic acetylcholine receptors (nAChR) in the human rhabdomyosarcoma TE 671 cell line. This neurotoxin is lethal to zebrafish by injection at the back of the dorsolateral region, but is not toxic to mice by intraperitoneal injection. This is Long neurotoxin MS5 from Micrurus surinamensis (Surinam coral snake).